The chain runs to 611 residues: MFS siderochrome iron transporter C (611 aa).

The tract at residues 1 to 25 (MPFLDHRTGPSYGTIDQMEQHSDDE) is disordered. A glycan (N-linked (GlcNAc...) asparagine) is linked at Asn-62. Helical transmembrane passes span 71–91 (VIAY…GQTV), 107–127 (LIST…PPMA), 136–156 (FEAF…MAAS), 165–185 (AQIF…VFIA), 194–214 (AFLA…GPTI), 228–248 (YGMW…SLLL), 282–302 (MGGL…LTLA), 313–333 (SIVA…FWES), 353–373 (ALAG…SVQP), 393–413 (VTQT…ILIK), 418–438 (YRAF…LMMV), 449–469 (ILVT…PVQL), 486–506 (MFLT…GAVW), and 560–580 (LLIL…AMED). The disordered stretch occupies residues 592–611 (VDPVPAEEGEIEPNRHVKRT).

It belongs to the major facilitator superfamily.

It is found in the membrane. Its function is as follows. Major facilitator transporter that contributes to the maintenance of intracellular siderophore ferricrocin (FC) levels. Plays a role in conidiation and confers protection against oxidative stress. Also contributes to fungal virulence in the Galleria mellonella animal model system. Does not appear to play a role in either siderophore export or uptake. The sequence is that of MFS siderochrome iron transporter C from Aspergillus fumigatus (strain ATCC MYA-4609 / CBS 101355 / FGSC A1100 / Af293) (Neosartorya fumigata).